Reading from the N-terminus, the 690-residue chain is Iron-sulfur clusters transporter ATM1, mitochondrial (690 aa).

A mitochondrion-targeting transit peptide spans 1 to 26; that stretch reads MLLLPRCPVIGRIVRSKFRSGLIRNH. Residues 27 to 110 lie on the Mitochondrial matrix side of the membrane; that stretch reads SPVIFTVSKL…PKGNNKVRIR (84 aa). The helical transmembrane segment at 111–132 threads the bilayer; sequence VLIALGLLISAKILNVQVPFFF. Residues 111–401 form the ABC transmembrane type-1 domain; that stretch reads VLIALGLLIS…LGSVYRDLKQ (291 aa). The Mitochondrial intermembrane portion of the chain corresponds to 133–155; that stretch reads KQTIDSMNIAWDDPTVALPAAIG. A helical membrane pass occupies residues 156–179; the sequence is LTILCYGVARFGSVLFGELRNAVF. Over 180 to 228 the chain is Mitochondrial matrix; it reads AKVAQNAIRTVSLQTFQHLMKLDLGWHLSRQTGGLTRAMDRGTKGISQV. Residues 229-252 form a helical membrane-spanning segment; sequence LTAMVFHIIPISFEISVVCGILTY. Position 253 (glutamine 253) is a topological domain, mitochondrial intermembrane. The helical transmembrane segment at 254–274 threads the bilayer; that stretch reads FGASFAAITFSTMLLYSIFTI. At 275 to 340 the chain is on the mitochondrial matrix side; sequence KTTAWRTHFR…SQIKVSQSLA (66 aa). Residues 280–284 and 343–346 each bind glutathione; these read RTHFR and NSGQ. The chain crosses the membrane as a helical span at residues 341–359; the sequence is FLNSGQNLIFTTALTAMMY. At 360 to 374 the chain is on the mitochondrial intermembrane side; it reads MGCTGVIGGNLTVGD. The helical transmembrane segment at 375 to 396 threads the bilayer; the sequence is LVLINQLVFQLSVPLNFLGSVY. A glutathione-binding site is contributed by glycine 393. At 397-690 the chain is on the mitochondrial matrix side; that stretch reads RDLKQSLIDM…ENELKDQQEL (294 aa). The region spanning 436–672 is the ABC transporter domain; the sequence is ITFENVTFGY…PGSLYRELWT (237 aa). ATP contacts are provided by residues tyrosine 445 and 469-480; that span reads GSSGSGKSTILK.

It belongs to the ABC transporter superfamily. ABCB family. Heavy Metal importer (TC 3.A.1.210) subfamily. As to quaternary structure, homodimer.

It localises to the mitochondrion inner membrane. Functionally, performs an essential function in the generation of cytoplasmic iron-sulfur proteins by mediating the ATP-dependent export of Fe/S cluster precursors synthesized by NFS1 and other mitochondrial proteins. Hydrolyzes ATP. Binds glutathione and may function by transporting a glutathione-conjugated iron-sulfur compound. The sequence is that of Iron-sulfur clusters transporter ATM1, mitochondrial from Saccharomyces cerevisiae (strain ATCC 204508 / S288c) (Baker's yeast).